Here is a 276-residue protein sequence, read N- to C-terminus: Undecaprenyl-diphosphatase (276 aa).

The next 7 helical transmembrane spans lie at 12-34 (LGIV…IVVG), 43-63 (TATA…MWEF), 85-105 (FNLL…ADLI), 108-128 (WLFN…IMLW), 185-205 (TEFS…YSLF), 218-238 (IFAI…RALL), and 249-269 (FAWY…LHLI).

The protein belongs to the UppP family.

It localises to the cell inner membrane. The catalysed reaction is di-trans,octa-cis-undecaprenyl diphosphate + H2O = di-trans,octa-cis-undecaprenyl phosphate + phosphate + H(+). Functionally, catalyzes the dephosphorylation of undecaprenyl diphosphate (UPP). Confers resistance to bacitracin. The polypeptide is Undecaprenyl-diphosphatase (Ectopseudomonas mendocina (strain ymp) (Pseudomonas mendocina)).